The chain runs to 94 residues: Acylphosphatase (94 aa).

Residues arginine 5–arginine 94 form the Acylphosphatase-like domain. Residues arginine 20 and asparagine 38 contribute to the active site.

It belongs to the acylphosphatase family.

The enzyme catalyses an acyl phosphate + H2O = a carboxylate + phosphate + H(+). In Corynebacterium glutamicum (strain R), this protein is Acylphosphatase (acyP).